Reading from the N-terminus, the 235-residue chain is MMMMQSRKIWYYRITLIILLFAMLLAWALLPGVHEFINRSVAAFAAVDQQGIERFIQSYGALAAVVSFLLMILQAIAAPLPAFLITFANASLFGAFWGGLLSWTSSMAGAALCFFIARVMGREVVEKLTGKTVLDSMDGFFTRYGKHTILVCRLLPFVPFDPISYAAGLTSIRFRSFFIATGLGQLPATIVYSWAGSMLTGGTFWFVTGLFILFALTVVIFMAKKIWLERQKRNA.

The Periplasmic portion of the chain corresponds to 1-13 (MMMMQSRKIWYYR). The chain crosses the membrane as a helical span at residues 14–34 (ITLIILLFAMLLAWALLPGVH). Over 35 to 64 (EFINRSVAAFAAVDQQGIERFIQSYGALAA) the chain is Cytoplasmic. A helical membrane pass occupies residues 65 to 85 (VVSFLLMILQAIAAPLPAFLI). The Periplasmic segment spans residues 86-95 (TFANASLFGA). The tract at residues 90–199 (ASLFGAFWGG…IVYSWAGSML (110 aa)) is VTT domain. Residues 96-116 (FWGGLLSWTSSMAGAALCFFI) form a helical membrane-spanning segment. At 117 to 176 (ARVMGREVVEKLTGKTVLDSMDGFFTRYGKHTILVCRLLPFVPFDPISYAAGLTSIRFRS) the chain is on the cytoplasmic side. The chain crosses the membrane as a helical span at residues 177 to 197 (FFIATGLGQLPATIVYSWAGS). Topologically, residues 198 to 202 (MLTGG) are periplasmic. The helical transmembrane segment at 203 to 223 (TFWFVTGLFILFALTVVIFMA) threads the bilayer. Residues 224–235 (KKIWLERQKRNA) lie on the Cytoplasmic side of the membrane.

Belongs to the TVP38/TMEM64 family.

Its subcellular location is the cell inner membrane. The polypeptide is TVP38/TMEM64 family inner membrane protein YdjZ (ydjZ) (Escherichia coli (strain K12)).